A 105-amino-acid polypeptide reads, in one-letter code: Probable non-functional immunoglobulin lambda variable 5-48 (105 aa).

Residues 1–19 form the signal peptide; that stretch reads MAWTPLLLLFLSHCTGSLS. Positions 20-44 are framework-1; it reads QAVLTQPTSLSASPGASARLTCTLR. Positions 20 to 105 constitute an Ig-like domain; it reads QAVLTQPTSL…NAGILFISGL (86 aa). Positions 45–53 are complementarity-determining-1; sequence SGISVGSYR. The segment at 54–70 is framework-2; it reads IYWYQQKPGSPPRYLLN. The segment at 71–77 is complementarity-determining-2; it reads YYSDSDK. The segment at 78–105 is framework-3; that stretch reads HQGSGVPSRFSGSKDASTNAGILFISGL.

In terms of assembly, immunoglobulins are composed of two identical heavy chains and two identical light chains; disulfide-linked.

Its subcellular location is the secreted. It is found in the cell membrane. In terms of biological role, probable non-functional open reading frame (ORF) of V region of the variable domain of immunoglobulin light chains. Non-functional ORF generally cannot participate in the synthesis of a productive immunoglobulin chain due to altered V-(D)-J or switch recombination and/or splicing site (at mRNA level) and/or conserved amino acid change (protein level). Immunoglobulins, also known as antibodies, are membrane-bound or secreted glycoproteins produced by B lymphocytes. In the recognition phase of humoral immunity, the membrane-bound immunoglobulins serve as receptors which, upon binding of a specific antigen, trigger the clonal expansion and differentiation of B lymphocytes into immunoglobulins-secreting plasma cells. Secreted immunoglobulins mediate the effector phase of humoral immunity, which results in the elimination of bound antigens. The antigen binding site is formed by the variable domain of one heavy chain, together with that of its associated light chain. Thus, each immunoglobulin has two antigen binding sites with remarkable affinity for a particular antigen. The variable domains are assembled by a process called V-(D)-J rearrangement and can then be subjected to somatic hypermutations which, after exposure to antigen and selection, allow affinity maturation for a particular antigen. The sequence is that of Probable non-functional immunoglobulin lambda variable 5-48 from Homo sapiens (Human).